The chain runs to 1148 residues: MEVTNNGSNNSSTIASTNPPTSPSTTSTSKSLPPLSFLNSQWENKQSNNNNNSNNNNINNNNNNNNNNNNNNNNNNNNNNNSVKMEKLIELPSSSNNSPEFLNGVNNNNNGNNNNNNNNNNNNNNNNNNNNNNNNNNNNNNNNNNNNSGSGGNNSNNNSNISSPPSSSSTSTSVLSSSQSAYMNDKMVAATLDSIGKMESIQRKYEMQIESLMDQIQGYIEKEQKLRSQCQAVEDINAKLENENLQLKKELFEMSRKFKEIDIINLNNTNNNINNNNNNNNNNNNNNNNNSINNNNNNGFSPPPLVKYPSNGSLQQDAKRFKIMEQQSQQQQQMQQQQQIQQQKQYQQQQQQTTSKRKNNISIDGDKEALVAEALGSFVDYAKPSLKRSNSEEVFNSSVYKNKNNINNINNNSNSNNNNGNNSLLNDIQNWQQQQQQQQQLLHQRKKRKDYDYDYNSTQNGKGIPSNSSNNNSSNNNSNNNNNNNSNNNNNIIGSISPPHSSQLQQVSSPQQQQQQQKPNGLKLSISSGSIKDLINSPNKEQSSKSQYPSSLSQSSSIPDMDTDVDSTDEFDFGSNSNNNNNNNNNNNNNNNSNNSNNKKRNNSNNNNLGGDDDDSPDSNDRNGSSSPIDMEPSYDGANLFKTVTPGTITTPQEELLNEIHSLQMQQRETIEKMYIAQKQFLSDRSNGFNNNNEEILRSLQSDQTKLGSTLESELQALNQLYSQTILEPNQLCKLDILLQDVSIQLKQLHLYQMELNYGYGSNEPFPATLVIIKQPFPMVISKFKQLQEDHLCVQLLTGANVEIVSYSPIRAELVFHSKNLTKGSSNLGTQNSLKKNIEKDTQVLDPIKGVAKFPIKFLTGTRKSCVKLHFVLQIKTSDGHIINVPSSTSQPFIVITNDCQWEGSEGTLLKKETFNEKFEISWPHFVNILQKHFLKATKQSPIQPTRPLSMYDFTYLSNTFFGGKPFVSHKDFDSFWSWFGKSIQTLRYKRHISTLWQNGFIFMFLKRDVVTQILKNQDVGTFVILFSEAFPGQLEISYVGTDQKDSLSKSSNDLQSPTTTTTTTTSTRVKHYLVQANDTSGSKRTLPDFLSECNQFTHILQLNIAMIPQTETIPVFKREPKNVVLEPYYSKRQNSQNILGSGYDPLF.

Positions methionine 1–serine 36 are enriched in low complexity. 5 disordered regions span residues methionine 1–asparagine 81, serine 93–serine 178, asparagine 268–glycine 312, lysine 403–leucine 425, and tyrosine 453–threonine 645. Residues phenylalanine 37–serine 47 show a composition bias toward polar residues. Composition is skewed to low complexity over residues asparagine 48 to asparagine 81, asparagine 106 to serine 178, and asparagine 268 to asparagine 298. The segment covering serine 466–glutamine 517 has biased composition (low complexity). Positions serine 525–glutamate 541 are enriched in polar residues. Residues serine 544–serine 557 show a composition bias toward low complexity. Residues methionine 561–aspartate 572 show a composition bias toward acidic residues. Residues glycine 574–glycine 610 are compositionally biased toward low complexity. One can recognise an SH2 domain in the interval tryptophan 997–lysine 1122.

The protein belongs to the transcription factor STAT family. As to quaternary structure, homodimer. Does not form heterodimers with other family members.

The protein localises to the nucleus. Its function is as follows. Transcription factor that regulates gene expression during development. Required for optimal cell growth. This chain is Signal transducer and activator of transcription B (dstB), found in Dictyostelium discoideum (Social amoeba).